The chain runs to 291 residues: Probable S-adenosylmethionine-dependent methyltransferase CRG1 (291 aa).

This sequence belongs to the methyltransferase superfamily.

The protein resides in the cytoplasm. In terms of biological role, probable S-adenosylmethionine-dependent methyltransferase which mediates cantharidin resistance. The polypeptide is Probable S-adenosylmethionine-dependent methyltransferase CRG1 (CRG1) (Saccharomyces cerevisiae (strain ATCC 204508 / S288c) (Baker's yeast)).